The chain runs to 236 residues: Small ribosomal subunit protein uS2c (236 aa).

Belongs to the universal ribosomal protein uS2 family.

The protein resides in the plastid. It is found in the chloroplast. The protein is Small ribosomal subunit protein uS2c (rps2) of Aethionema grandiflorum (Persian stone-cress).